The primary structure comprises 767 residues: Granule-bound starch synthase 2, chloroplastic/amyloplastic (767 aa).

The N-terminal 45 residues, 1-45, are a transit peptide targeting the chloroplast; the sequence is MENSILLHSGNQFHPNLPLLALRPKKLSLIHGSSREQMWRIKRVK. 2 disordered regions span residues 160 to 204 and 226 to 268; these read KRDL…SSQE and YMPS…EKPP. The span at 172–188 shows a compositional bias: low complexity; it reads SRSSITASSQISSTVSS. Positions 230 to 245 are enriched in basic and acidic residues; it reads LRKESSASHVEQRNEN. Residues 253–262 are compositionally biased toward acidic residues; that stretch reads ANEETEDPVN. Residue K290 coordinates ADP-alpha-D-glucose.

Belongs to the glycosyltransferase 1 family. Bacterial/plant glycogen synthase subfamily.

The protein localises to the plastid. It localises to the chloroplast. It is found in the amyloplast. It catalyses the reaction [(1-&gt;4)-alpha-D-glucosyl](n) + ADP-alpha-D-glucose = [(1-&gt;4)-alpha-D-glucosyl](n+1) + ADP + H(+). Its pathway is glycan biosynthesis; starch biosynthesis. Accounts for only 10 to 15% of the total soluble starch synthase activity in tubers. This chain is Granule-bound starch synthase 2, chloroplastic/amyloplastic (SS2), found in Solanum tuberosum (Potato).